Consider the following 304-residue polypeptide: D-alanine--D-alanine ligase (304 aa).

The region spanning 100–301 (KLVALQSGIP…FGEFLEDLIK (202 aa)) is the ATP-grasp domain. An ATP-binding site is contributed by 129–184 (ERKLGSPFIVKPCDVGSTIGLSLVRSASEYEVALEEAFRFSDRLLLEEFIDGFEVT). Residues Asp256, Glu268, and Asn270 each contribute to the Mg(2+) site.

This sequence belongs to the D-alanine--D-alanine ligase family. It depends on Mg(2+) as a cofactor. The cofactor is Mn(2+).

Its subcellular location is the cytoplasm. It catalyses the reaction 2 D-alanine + ATP = D-alanyl-D-alanine + ADP + phosphate + H(+). It functions in the pathway cell wall biogenesis; peptidoglycan biosynthesis. Its function is as follows. Cell wall formation. The protein is D-alanine--D-alanine ligase of Coprothermobacter proteolyticus (strain ATCC 35245 / DSM 5265 / OCM 4 / BT).